The chain runs to 170 residues: M-agglutinin (170 aa).

Residues 1-24 form the signal peptide; sequence MNLKKIAIASSVFAGITMALTCHA.

In terms of biological role, this protein is a non-fimbrial hemagglutinin that is specific for blood group M. The chain is M-agglutinin (bmaE) from Escherichia coli.